Reading from the N-terminus, the 1357-residue chain is MTYSYTEKKRIRKDFGKLPAVMDVPYLLSIQLDSYHDFLQQDVAIEDRQEVGLHAAFKSVFPIVSFSGNAALEYVSYRLGQPVFDVAECQLRGVTYAAPLRVKVRLIIYDKESSTKAIKDIKEQEVYMGEVPLMTENGTFVINGTERVIVSQLHRSPGVFFDHDKGKTHSSGKLLYSARIIPYRGSWLDFEFDPKDCVFVRIDRRRKLPATILLRALGYAADEMLEMFFENSLFEVEGGEYFLDLVPSRLRGDIAIFEIKDDEGNLIVEEGRRVTARHIRQMEKAGLKRLRVPSSYLLGKVTATNIADPSTGEVIVECNTEITDDAIEKIEKAGIKRIETLYTNDLDCGPFVSDTLRIDATRSQLEALVEIYRMMRPGEPPTKESAENLFNNLFFSEERYDLSAVGRMKFNRRLGREETEGLGVLSHSDIIDVLRTLIDIRNGKGVVDDIDHLGNRRVRSVGEMAENQFRVGLVRVERAVKERLSMAESEGLMPQDLINAKPVAAAVKEFFGSSQLSQFMDQNNPLSEVTHKRRVSALGPGGLTRERAGFEVRDVHPTHYGRVCPIETPEGPNIGLINSLATYARTNTYGFLESPYRKVVDGLVTDDIEYLSAIEESDYVIAQASAAVDENGRLIDELVTVRHKNEFTVMPPEKVTLMDVSPRQVVSVAASLIPFLEHDDANRALMGSNMQRQAVPTLKAEKPLVGTGMERYVAQDSGVCVVARRGGVVVSVDAARIVVRVSDDETEAGDAGVDIYNLTKYQRSNQNTCINQRSLVMEGDEVARGDVLADGPSVDLGELALGQNMRIAFMPWNGYNFEDSILVSERVVQEDRFTTIHIQELTCVARDTKLGPEEVTADIPNVGESALAKLDDSGIIYIGAEVEPGDILVGKVTPKGETQLTPEEKLLRAIFGEKASDVKDTSLRVSTGMRGTVIDVQVFTRDGVEKDQRAKEIEQTELNKFRKDLNDEYKIVEGATFERLRSALLGQSVIGGPGLKKGDTLTEVHFNAFEKEEWFKLNMADEQLNELLEKAEGQLQERRKSIEDRYEDKKRKLQSGDDLAPGVLKIVKVYVAVKRRIQPGDKMAGRHGNKGVISAIKPVEDMPYDEQGNPVDIVLNPLGVPSRMNVGQVLETHLGAAAKGLGDKINRMLAEQKQAAEIRKFLHEIYNGIGGRNEDLDSLSDSEVLVLAANLKKGVPMATPVFDGAKEKEIKEMLRLADMDDSGQVWLYDGRTGERFERQVTVGYMYMLKLNHLVDDKMHARSTGSYSLVTQQPLGGKAQFGGQRFGEMEVWALEAYGAAYTLQEMLTVKSDDVNGRTKMYKNIVDGDHRMEPGMPESFNVLVKEIRSLGIDIELEAN.

It belongs to the RNA polymerase beta chain family. As to quaternary structure, the RNAP catalytic core consists of 2 alpha, 1 beta, 1 beta' and 1 omega subunit. When a sigma factor is associated with the core the holoenzyme is formed, which can initiate transcription.

The catalysed reaction is RNA(n) + a ribonucleoside 5'-triphosphate = RNA(n+1) + diphosphate. Its function is as follows. DNA-dependent RNA polymerase catalyzes the transcription of DNA into RNA using the four ribonucleoside triphosphates as substrates. The protein is DNA-directed RNA polymerase subunit beta of Hahella chejuensis (strain KCTC 2396).